The sequence spans 780 residues: Zinc finger and SCAN domain-containing protein 10 (780 aa).

The tract at residues Met-1–Leu-38 is disordered. A compositionally biased stretch (basic and acidic residues) spans Glu-29–Leu-38. In terms of domain architecture, SCAN box spans Met-56–Pro-126. 2 disordered regions span residues Gly-153–Gln-237 and Lys-255–Leu-324. Ser-162 and Ser-208 each carry phosphoserine. The segment covering Ser-202–Gln-224 has biased composition (polar residues). Thr-268 bears the Phosphothreonine mark. A compositionally biased stretch (basic and acidic residues) spans Thr-268–Lys-280. 14 consecutive C2H2-type zinc fingers follow at residues Phe-347 to His-370, Phe-376 to His-398, His-404 to His-426, Phe-432 to His-454, Val-476 to His-498, Phe-522 to His-544, Phe-550 to His-572, Tyr-578 to His-600, His-606 to His-628, Cys-634 to His-656, His-662 to His-684, Tyr-690 to His-712, Gln-724 to His-746, and Tyr-752 to His-774. N5-methylglutamine is present on Gln-483. Residues Lys-492–Arg-520 form a disordered region. The span at His-498–Arg-520 shows a compositional bias: basic and acidic residues.

In terms of assembly, interacts with POU5F1/OCT4 and SOX2. Post-translationally, methylated at Gln-483 by N6AMT1.

The protein localises to the nucleus. Its function is as follows. Embryonic stem (ES) cell-specific transcription factor required to maintain ES cell pluripotency. Can both activate and /or repress expression of target genes, depending on the context. Specifically binds the 5'-[GA]CGCNNGCG[CT]-3' DNA consensus sequence. Regulates expression of POU5F1/OCT4, ZSCAN4 and ALYREF/THOC4. This is Zinc finger and SCAN domain-containing protein 10 (ZSCAN10) from Homo sapiens (Human).